We begin with the raw amino-acid sequence, 1125 residues long: Phytochrome A (1125 aa).

2 stretches are compositionally biased toward low complexity: residues 1–14 and 39–48; these read MSSSRPSHSSSNSA and SGSSFDYSSS. Disordered stretches follow at residues 1–22 and 38–64; these read MSSSRPSHSSSNSARSRHSARI and ESGSSFDYSSSVRVTDSVGGDQPPRSD. Positions 218-401 constitute a GAF domain; sequence SMERLCDTMV…VFAIHVNKEL (184 aa). C323 lines the phytochromobilin pocket. PAS domains lie at 617–687 and 750–821; these read VTSE…LQGK and DYKA…VNLG. Residues 901–1117 enclose the Histidine kinase domain; the sequence is YLKKQIWNPL…SFIISVELAG (217 aa).

The protein belongs to the phytochrome family. In terms of assembly, homodimer. In terms of processing, contains one covalently linked phytochromobilin chromophore.

Its function is as follows. Regulatory photoreceptor which exists in two forms that are reversibly interconvertible by light: the Pr form that absorbs maximally in the red region of the spectrum and the Pfr form that absorbs maximally in the far-red region. Photoconversion of Pr to Pfr induces an array of morphogenic responses, whereas reconversion of Pfr to Pr cancels the induction of those responses. Pfr controls the expression of a number of nuclear genes including those encoding the small subunit of ribulose-bisphosphate carboxylase, chlorophyll A/B binding protein, protochlorophyllide reductase, rRNA, etc. It also controls the expression of its own gene(s) in a negative feedback fashion. In Populus tremuloides (Quaking aspen), this protein is Phytochrome A (PHYA).